The primary structure comprises 305 residues: Aspartate carbamoyltransferase catalytic subunit (305 aa).

Residues R54 and T55 each coordinate carbamoyl phosphate. Residue K83 participates in L-aspartate binding. Residues R104, H132, and Q135 each contribute to the carbamoyl phosphate site. R165 and R226 together coordinate L-aspartate. Positions 265 and 266 each coordinate carbamoyl phosphate.

The protein belongs to the aspartate/ornithine carbamoyltransferase superfamily. ATCase family. Heterooligomer of catalytic and regulatory chains.

It catalyses the reaction carbamoyl phosphate + L-aspartate = N-carbamoyl-L-aspartate + phosphate + H(+). Its pathway is pyrimidine metabolism; UMP biosynthesis via de novo pathway; (S)-dihydroorotate from bicarbonate: step 2/3. Its function is as follows. Catalyzes the condensation of carbamoyl phosphate and aspartate to form carbamoyl aspartate and inorganic phosphate, the committed step in the de novo pyrimidine nucleotide biosynthesis pathway. The chain is Aspartate carbamoyltransferase catalytic subunit from Pyrobaculum arsenaticum (strain DSM 13514 / JCM 11321 / PZ6).